The chain runs to 460 residues: Glucan endo-1,3-beta-D-glucosidase (460 aa).

A signal peptide spans 1–26; that stretch reads MAANVQTSSLLFLVFLLLQNFYSANS. The active-site Proton donor is Glu123. Glu268 serves as the catalytic Nucleophile. The disordered stretch occupies residues 352 to 371; the sequence is NTQNPTTPATPTPTPKAAGS. A glycan (N-linked (GlcNAc...) asparagine) is linked at Asn355. Residues Cys373 and Cys435 are joined by a disulfide bond. N-linked (GlcNAc...) asparagine glycosylation occurs at Asn447.

Belongs to the glycosyl hydrolase 17 family. As to quaternary structure, homodimer. In terms of processing, glycosylated. Contains two additional disulfide bonds, but it is unclear if they are between the pairs Cys-392-Cys-398 and Cys-407-Cys-453 (PudMed:18096638) or between the pairs Cys-392-Cys-453 and Cys-398-Cys-407 (PudMed:12392450). As to expression, expressed only in pollen.

The protein localises to the secreted. It carries out the reaction Hydrolysis of (1-&gt;3)-beta-D-glucosidic linkages in (1-&gt;3)-beta-D-glucans.. The protein is Glucan endo-1,3-beta-D-glucosidase (OLE9) of Olea europaea (Common olive).